The chain runs to 498 residues: ATP synthase subunit beta, chloroplastic (498 aa).

Phosphothreonine is present on threonine 6. Phosphoserine is present on serine 13. 172–179 (GGAGVGKT) serves as a coordination point for ATP.

The protein belongs to the ATPase alpha/beta chains family. In terms of assembly, F-type ATPases have 2 components, CF(1) - the catalytic core - and CF(0) - the membrane proton channel. CF(1) has five subunits: alpha(3), beta(3), gamma(1), delta(1), epsilon(1). CF(0) has four main subunits: a(1), b(1), b'(1) and c(9-12).

The protein localises to the plastid. The protein resides in the chloroplast thylakoid membrane. It catalyses the reaction ATP + H2O + 4 H(+)(in) = ADP + phosphate + 5 H(+)(out). Its function is as follows. Produces ATP from ADP in the presence of a proton gradient across the membrane. The catalytic sites are hosted primarily by the beta subunits. The sequence is that of ATP synthase subunit beta, chloroplastic from Nasturtium officinale (Watercress).